Reading from the N-terminus, the 367-residue chain is MPFLGQDWRSPGWSWIKTEDGWKRCESCSQKLERENNRCNISHSIILNSEDGEIFNNEEHEYASKKRKKDHFRNDTNTQSFYREKWIYVHKESTKERHGYCTLGEAFNRLDFSSAIQDIRRFNYVVKLLQLIAKSQLTSLSGVAQKNYFNILDKIVQKVLDDHHNPRLIKDLLQDLSSTLCILIRGVGKSVLVGNINIWICRLETILAWQQQLQDLQMTKQVNNGLTLSDLPLHMLNNILYRFSDGWDIITLGQVTPTLYMLSEDRQLWKKLCQYHFAEKQFCRHLILSEKGHIEWKLMYFALQKHYPAKEQYGDTLHFCRHCSILFWKDYHLALLFKDSGHPCTAADPDSCFTPVSPQHFIDLFKF.

The segment at 1-83 is interaction with beta-actin; sequence MPFLGQDWRS…NDTNTQSFYR (83 aa). The F-box domain occupies 226–274; it reads LTLSDLPLHMLNNILYRFSDGWDIITLGQVTPTLYMLSEDRQLWKKLCQ.

As to quaternary structure, part of a SCF (SKP1-cullin-F-box) protein ligase complex consisting of FBXO25, SKP1, CUL1 and RBX1. Interacts directly with SKP1 and CUL1. Interacts (via C-terminus) with beta-actin (via N-terminus). Expressed in all brain tissue observed.

Its subcellular location is the nucleus. It participates in protein modification; protein ubiquitination. Functionally, substrate-recognition component of the SCF (SKP1-CUL1-F-box protein)-type E3 ubiquitin ligase complex. May play a role in accumulation of expanded polyglutamine (polyQ) protein huntingtin (HTT). The polypeptide is F-box only protein 25 (FBXO25) (Homo sapiens (Human)).